Consider the following 354-residue polypeptide: Protein-glutamate methylesterase/protein-glutamine glutaminase (354 aa).

A Response regulatory domain is found at 6–123 (RVLIVDDSAV…SQSLETLSAA (118 aa)). Asp57 carries the 4-aspartylphosphate modification. Residues 159-351 (ARTTHQLLAV…GDLLKQLQTR (193 aa)) enclose the CheB-type methylesterase domain. Active-site residues include Ser171, His197, and Asp293.

The protein belongs to the CheB family. In terms of processing, phosphorylated by CheA. Phosphorylation of the N-terminal regulatory domain activates the methylesterase activity.

Its subcellular location is the cytoplasm. It catalyses the reaction [protein]-L-glutamate 5-O-methyl ester + H2O = L-glutamyl-[protein] + methanol + H(+). The enzyme catalyses L-glutaminyl-[protein] + H2O = L-glutamyl-[protein] + NH4(+). Functionally, involved in chemotaxis. Part of a chemotaxis signal transduction system that modulates chemotaxis in response to various stimuli. Catalyzes the demethylation of specific methylglutamate residues introduced into the chemoreceptors (methyl-accepting chemotaxis proteins or MCP) by CheR. Also mediates the irreversible deamidation of specific glutamine residues to glutamic acid. The sequence is that of Protein-glutamate methylesterase/protein-glutamine glutaminase from Bdellovibrio bacteriovorus (strain ATCC 15356 / DSM 50701 / NCIMB 9529 / HD100).